Consider the following 158-residue polypeptide: MHYHTNLIAALLLAALIHEGSAIWCYRCTSATPGCAEKFNWRGIGFLGEHCPEPDDICVKVTERRGARETITRDCLSALSFRKDIPADKYEGCRPAAHDEKLANYVNHTIKEHDVRRDYYTDTTFCFCFLDHRCNGASGLQTSAVIGLLTLIPALLLR.

The signal sequence occupies residues 1-22 (MHYHTNLIAALLLAALIHEGSA). Over 23–136 (IWCYRCTSAT…FCFLDHRCNG (114 aa)) the chain is Extracellular. Asparagine 107 carries an N-linked (GlcNAc...) asparagine glycan. Asparagine 135 is lipidated: GPI-anchor amidated asparagine. Residues 136–158 (GASGLQTSAVIGLLTLIPALLLR) constitute a propeptide, removed in mature form. The chain crosses the membrane as a helical span at residues 137–157 (ASGLQTSAVIGLLTLIPALLL). Arginine 158 is a topological domain (cytoplasmic).

It belongs to the quiver family.

Its subcellular location is the membrane. Its function is as follows. Required for septate junction assembly possibly by organizing the preassembly and transport of septate junction proteins. Involved in epithelial cell septate junction-mediated paracellular barrier functions of trachea, hindgut and salivary gland. This is UPAR/Ly6 domain-containing protein crim from Drosophila melanogaster (Fruit fly).